Here is a 628-residue protein sequence, read N- to C-terminus: Somatic embryogenesis receptor kinase 2 (628 aa).

Residues 1 to 29 (MGRKKFEAFGFVCLISLLLLFNSLWLASS) form the signal peptide. Over 30–241 (NMEGDALHSL…PTPGGYSATG (212 aa)) the chain is Extracellular. Positions 45–85 (DPNNVLQSWDPTLVNPCTWFHVTCNNENSVIRVDLGNADLS) are PSKR1 binding. Positions 56-58 (TLV) are CLE44 binding. A disulfide bridge connects residues cysteine 61 and cysteine 68. Leucine-rich repeat receptor-like protein kinase binding stretches follow at residues 62-81 (TWFH…DLGN) and 100-105 (YLELYS). Brassinolide is bound at residue 64–65 (FH). LRR repeat units lie at residues 95 to 119 (LKNL…LGNL), 121 to 143 (NLVS…LGKL), 144 to 167 (FKLR…LTNI), and 168 to 192 (MTLQ…SFSL). N-linked (GlcNAc...) asparagine glycosylation is found at asparagine 107 and asparagine 118. Leucine-rich repeat receptor-like protein kinase binding stretches follow at residues 126–129 (DLYL) and 148–150 (FLR). N-linked (GlcNAc...) asparagine glycosylation is found at asparagine 153 and asparagine 187. The leucine-rich repeat receptor-like protein kinase binding stretch occupies residues 174-197 (DLSNNRLSGSVPDNGSFSLFTPIS). Cysteine 205 and cysteine 213 are disulfide-bonded. The helical transmembrane segment at 242 to 262 (AIAGGVAAGAALLFAAPALAF) threads the bilayer. The Cytoplasmic portion of the chain corresponds to 263–628 (AWWRRRKPQE…LHAMELSGPR (366 aa)). A Phosphothreonine modification is found at threonine 302. The 288-residue stretch at 305-592 (FSNKNILGRG…GLAEKWDEWQ (288 aa)) folds into the Protein kinase domain. Residue 311-319 (LGRGGFGKV) participates in ATP binding. Threonine 328 is modified (phosphothreonine). Lysine 333 is an ATP binding site. Phosphoserine occurs at positions 386 and 389. Catalysis depends on aspartate 432, which acts as the Proton acceptor. Phosphothreonine is present on residues threonine 462, threonine 465, threonine 466, and threonine 471. A Phosphotyrosine modification is found at tyrosine 479. Serine 481 carries the phosphoserine modification. Phosphothreonine is present on threonine 482. Serine 486 bears the Phosphoserine mark. A Phosphothreonine modification is found at threonine 562. Position 604 is a phosphoserine (serine 604). Threonine 616 carries the post-translational modification Phosphothreonine. Serine 625 bears the Phosphoserine mark.

The protein belongs to the protein kinase superfamily. Ser/Thr protein kinase family. In terms of assembly, homo- and heterodimer. Component of the SERK1 signaling complex, composed of KAPP, CDC48A, GRF6 or GRF7, SERK1, SERK2, SERK3/BAK1 and BRI1. Bind to BRI1 in a brassinolide-dependent manner. Heterodimer with PSKR1. Interacts with the EF-Tu receptor EFR and FLS2 in a specific ligand-induced manner. Interacts with ERECTA in a EPF2-induced manner. Interacts with ERL1 in a EPF1-induced manner. Interacts with TMM. In the presence of the signal peptide RGF1, interacts with RGI3/RGFR1 and RGI4/RGFR2/SKM2. Binds to the peptide CLE44 in the presence of TDR. In terms of processing, autophosphorylated. In terms of tissue distribution, expressed in flowers, tapetum, developing microspores, all cells of the embryo sac, provascular strands and developing vascular bundles. Low expression in adult vascular tissue.

It is found in the cell membrane. It carries out the reaction L-seryl-[protein] + ATP = O-phospho-L-seryl-[protein] + ADP + H(+). The enzyme catalyses L-threonyl-[protein] + ATP = O-phospho-L-threonyl-[protein] + ADP + H(+). In terms of biological role, serine/threonine-kinase involved in brassinosteroid-dependent and -independent signaling pathways. Acts redundantly with SERK1 as a control point for sporophytic development controlling male gametophyte production. Serves as coreceptor to small peptide (e.g. RGF1 and CLE44) signaling. Involved in the perception of phytosulfokine and subsequent signal transduction. The sequence is that of Somatic embryogenesis receptor kinase 2 from Arabidopsis thaliana (Mouse-ear cress).